A 475-amino-acid chain; its full sequence is Ribulose bisphosphate carboxylase large chain (475 aa).

Positions 1-2 (MS) are excised as a propeptide. The residue at position 3 (Pro3) is an N-acetylproline. N6,N6,N6-trimethyllysine is present on Lys14. Residues Asn123 and Thr173 each coordinate substrate. The active-site Proton acceptor is Lys175. Lys177 contributes to the substrate binding site. Positions 201, 203, and 204 each coordinate Mg(2+). An N6-carboxylysine modification is found at Lys201. His294 serves as the catalytic Proton acceptor. 3 residues coordinate substrate: Arg295, His327, and Ser379.

Belongs to the RuBisCO large chain family. Type I subfamily. As to quaternary structure, heterohexadecamer of 8 large chains and 8 small chains; disulfide-linked. The disulfide link is formed within the large subunit homodimers. Mg(2+) is required as a cofactor. In terms of processing, the disulfide bond which can form in the large chain dimeric partners within the hexadecamer appears to be associated with oxidative stress and protein turnover.

It is found in the plastid. It localises to the chloroplast. The enzyme catalyses 2 (2R)-3-phosphoglycerate + 2 H(+) = D-ribulose 1,5-bisphosphate + CO2 + H2O. The catalysed reaction is D-ribulose 1,5-bisphosphate + O2 = 2-phosphoglycolate + (2R)-3-phosphoglycerate + 2 H(+). RuBisCO catalyzes two reactions: the carboxylation of D-ribulose 1,5-bisphosphate, the primary event in carbon dioxide fixation, as well as the oxidative fragmentation of the pentose substrate in the photorespiration process. Both reactions occur simultaneously and in competition at the same active site. In Amborella trichopoda, this protein is Ribulose bisphosphate carboxylase large chain.